We begin with the raw amino-acid sequence, 270 residues long: Sulfur carrier protein FdhD (270 aa).

Cys-116 serves as the catalytic Cysteine persulfide intermediate. A Mo-bis(molybdopterin guanine dinucleotide)-binding site is contributed by 253–258 (FAREGK).

It belongs to the FdhD family.

The protein localises to the cytoplasm. Functionally, required for formate dehydrogenase (FDH) activity. Acts as a sulfur carrier protein that transfers sulfur from IscS to the molybdenum cofactor prior to its insertion into FDH. In Haemophilus influenzae (strain ATCC 51907 / DSM 11121 / KW20 / Rd), this protein is Sulfur carrier protein FdhD.